The following is a 138-amino-acid chain: Phospholipase A2 crotoxin basic chain CBa2 (138 aa).

Residues 1 to 16 form the signal peptide; sequence MRALWIVAVLLVGVEG. Disulfide bonds link Cys42–Cys131, Cys44–Cys60, Cys59–Cys111, Cys65–Cys138, Cys66–Cys104, Cys73–Cys97, and Cys91–Cys102. Tyr43, Gly45, and Gly47 together coordinate Ca(2+). His63 is a catalytic residue. Asp64 contributes to the Ca(2+) binding site. Residue Asp105 is part of the active site.

Belongs to the phospholipase A2 family. Group II subfamily. D49 sub-subfamily. As to quaternary structure, heterodimer of one of the acidic (CA1, CA2, CA3 or CA4) and one of the basic (CBa1, CBa2, CBb, CBc or CBd) subunits; non-covalently linked. The acidic subunit is non-toxic, without enzymatic activity and comprises 3 peptides that are cross-linked by 5 disulfide bridges. The basic subunit is toxic, has phospholipase A2 activity and is composed of a single chain. Multiple variants of each subunit give different crotoxin complexes that can be subdivided into 2 classes: (1) those of high toxicity, low PLA2 activity (CBb, CBc and CBd linked with high affinity to any CA) and high stability (K(d)=4.5 nM) and (2) those of moderate toxicity, high PLA2 activity (CBa2 linked with low affinity to any CA) and low stability (K(d)=25 nM). Interacts with human NBD1 domain of CFTR. Requires Ca(2+) as cofactor. Expressed by the venom gland.

It is found in the secreted. The catalysed reaction is a 1,2-diacyl-sn-glycero-3-phosphocholine + H2O = a 1-acyl-sn-glycero-3-phosphocholine + a fatty acid + H(+). In terms of biological role, heterodimer CA-CB: Crotoxin is a potent presynaptic neurotoxin that possesses phospholipase A2 (PLA2) activity and exerts a lethal action by blocking neuromuscular transmission. It consists of a non-covalent association of a basic and weakly toxic PLA2 subunit (CBa2, CBb, CBc, or CBd), with a small acidic, non-enzymatic and non-toxic subunit (CA1, CA2, CA3 or CA4). The complex acts by binding to a specific 48-kDa protein (R48) receptor located on presynaptic membranes, forming a transient ternary complex CA-CB-R48, followed by dissociation of the CA-CB complex and release of the CA subunit. At equilibrium, only the CB subunits remain associated with the specific crotoxin receptor. In addition to neurotoxicity, crotoxin has been found to exert myotoxicity, nephrotoxicity, and cardiovascular toxicity. Moreover, anti-inflammatory, immunomodulatory, anti-tumor and analgesic effects of crotoxin have also been reported. Monomer CBa2: The basic subunit of crotoxin is a snake venom phospholipase A2 (PLA2) that exhibits weak neurotoxicity (10-fold less than the heterodimer) and strong anticoagulant effects by binding to factor Xa (F10) and inhibiting the prothrombinase activity (IC(50) is 41 nM). In addition, it shows the same effects described for the heterodimer and binds the nucleotide-binding domain (NBD1) of CFTR chloride channels and increases the channel current. PLA2 catalyzes the calcium-dependent hydrolysis of the 2-acyl groups in 3-sn-phosphoglycerides. The sequence is that of Phospholipase A2 crotoxin basic chain CBa2 from Crotalus durissus terrificus (South American rattlesnake).